The sequence spans 54 residues: U1-ctenitoxin-Pr1a (54 aa).

Disulfide bonds link Cys-2–Cys-19, Cys-9–Cys-25, Cys-16–Cys-51, Cys-18–Cys-39, and Cys-27–Cys-37.

As to expression, expressed by the venom gland.

It is found in the secreted. Functionally, omega-agatoxins are antagonists of voltage-gated calcium channels (Cav). Causes rapid general flaccid paralysis followed by death in 10-30 minutes when injected in mice at dose levels of 5 ug per mouse. In Phoneutria reidyi (Brazilian Amazonian armed spider), this protein is U1-ctenitoxin-Pr1a.